Reading from the N-terminus, the 297-residue chain is 3-methyl-2-oxobutanoate hydroxymethyltransferase (297 aa).

The segment covering 1 to 12 (MSEQISEQSEQN) has biased composition (polar residues). The segment at 1 to 36 (MSEQISEQSEQNVYGACPPVPAGESSPSAASAPRTK) is disordered. The span at 22-33 (AGESSPSAASAP) shows a compositional bias: low complexity. Mg(2+) contacts are provided by Asp-78 and Asp-117. Residues 78 to 79 (DS), Asp-117, and Lys-147 each bind 3-methyl-2-oxobutanoate. Glu-149 is a Mg(2+) binding site. Residue Glu-215 is the Proton acceptor of the active site.

The protein belongs to the PanB family. In terms of assembly, homodecamer; pentamer of dimers. Mg(2+) is required as a cofactor.

It localises to the cytoplasm. It catalyses the reaction 3-methyl-2-oxobutanoate + (6R)-5,10-methylene-5,6,7,8-tetrahydrofolate + H2O = 2-dehydropantoate + (6S)-5,6,7,8-tetrahydrofolate. The protein operates within cofactor biosynthesis; (R)-pantothenate biosynthesis; (R)-pantoate from 3-methyl-2-oxobutanoate: step 1/2. Functionally, catalyzes the reversible reaction in which hydroxymethyl group from 5,10-methylenetetrahydrofolate is transferred onto alpha-ketoisovalerate to form ketopantoate. This chain is 3-methyl-2-oxobutanoate hydroxymethyltransferase, found in Mycobacterium ulcerans (strain Agy99).